The chain runs to 374 residues: Chaperone protein DnaJ (374 aa).

The 66-residue stretch at 4 to 69 folds into the J domain; it reads SYYEILEITQ…EKRAIYDRYG (66 aa). A CR-type zinc finger spans residues 136–213; sequence GCKKNIDFTY…CKGLGYNESK (78 aa). 8 residues coordinate Zn(2+): Cys149, Cys152, Cys165, Cys168, Cys187, Cys190, Cys201, and Cys204. 4 CXXCXGXG motif repeats span residues 149 to 156, 165 to 172, 187 to 194, and 201 to 208; these read CKTCNGTG, CPKCQGRG, CPDCQGSG, and CSDCKGLG.

It belongs to the DnaJ family. As to quaternary structure, homodimer. Zn(2+) is required as a cofactor.

It is found in the cytoplasm. Functionally, participates actively in the response to hyperosmotic and heat shock by preventing the aggregation of stress-denatured proteins and by disaggregating proteins, also in an autonomous, DnaK-independent fashion. Unfolded proteins bind initially to DnaJ; upon interaction with the DnaJ-bound protein, DnaK hydrolyzes its bound ATP, resulting in the formation of a stable complex. GrpE releases ADP from DnaK; ATP binding to DnaK triggers the release of the substrate protein, thus completing the reaction cycle. Several rounds of ATP-dependent interactions between DnaJ, DnaK and GrpE are required for fully efficient folding. Also involved, together with DnaK and GrpE, in the DNA replication of plasmids through activation of initiation proteins. The protein is Chaperone protein DnaJ of Campylobacter jejuni subsp. jejuni serotype O:6 (strain 81116 / NCTC 11828).